Reading from the N-terminus, the 299-residue chain is Probable alpha-L-glutamate ligase 2 (299 aa).

Residues 104–287 enclose the ATP-grasp domain; the sequence is MQLMSRRGIG…VAGAIIEFVE (184 aa). ATP-binding positions include lysine 141, 178-179, aspartate 187, and 211-213; these read EY and RSN. Residues aspartate 248, glutamate 260, and asparagine 262 each contribute to the Mg(2+) site. Residues aspartate 248, glutamate 260, and asparagine 262 each coordinate Mn(2+).

The protein belongs to the RimK family. It depends on Mg(2+) as a cofactor. Mn(2+) serves as cofactor.

The chain is Probable alpha-L-glutamate ligase 2 from Shewanella sp. (strain MR-4).